We begin with the raw amino-acid sequence, 131 residues long: F(420)H(2) dehydrogenase subunit O (131 aa).

3 residues coordinate [2Fe-2S] cluster: cysteine 58, cysteine 63, and cysteine 66.

It belongs to the FpoO family. The FPO complex is composed of at least 13 different subunits. [2Fe-2S] cluster is required as a cofactor.

It catalyses the reaction methanophenazine + reduced coenzyme F420-(gamma-L-Glu)(n) = dihydromethanophenazine + oxidized coenzyme F420-(gamma-L-Glu)(n) + H(+). Component of the F(420)H(2) dehydrogenase (FPO complex) which is part of the energy-conserving F(420)H(2):heterodisulfide oxidoreductase system. The membrane-bound electron transfer system of the complex plays an important role in the metabolism of methylotrophic methanogens when the organisms grow on methanol or methylamines. Catalyzes the oxidation of methanophenazine to dihydromethanophenazine. It shuttles electrons from F(420)H(2), via FAD and iron-sulfur (Fe-S) centers, to methanophenazine (an electron carrier in the membrane). It couples the redox reaction to proton translocation (for every two electrons transferred, two hydrogen ions are translocated across the cytoplasmic membrane), and thus conserves the redox energy in a proton gradient. It also catalyzes the oxidation of F(420)H(2) with quinones such as 2,3-dimethyl-1,4-naphthoquinone, 2-methyl-1,4-naphthoquinone and tetramethyl-p-benzoquinone. The protein is F(420)H(2) dehydrogenase subunit O (fpoO) of Methanosarcina mazei (strain ATCC BAA-159 / DSM 3647 / Goe1 / Go1 / JCM 11833 / OCM 88) (Methanosarcina frisia).